A 232-amino-acid chain; its full sequence is Membrane steroid-binding protein 1 (232 aa).

A helical transmembrane segment spans residues 25-45; the sequence is AAFFTAVAAAAALYHVVSGIF. 2 disordered regions span residues 48 to 77 and 172 to 232; these read PPPP…VSEE and TVPV…AKES. In terms of domain architecture, Cytochrome b5 heme-binding spans 71–170; that stretch reads LGEVSEEELR…GKYVKVGTVK (100 aa). Residues 73-170 form a steroid-binding region; sequence EVSEEELRQY…GKYVKVGTVK (98 aa). A compositionally biased stretch (low complexity) spans 179–193; it reads APSTSPETTETAAAA. A compositionally biased stretch (basic and acidic residues) spans 194-219; that stretch reads EPEKAPATEEKPREVSSEEVKEKEDA.

The protein belongs to the cytochrome b5 family. MAPR subfamily. In terms of assembly, interacts with SERL2. Expressed in leaf sheaths, leaf blades and panicles.

It localises to the cell membrane. Functionally, binds multiple steroid compounds. May act as a coreceptor with SERL2 and enhance its endocytosis. In Oryza sativa subsp. japonica (Rice), this protein is Membrane steroid-binding protein 1.